A 270-amino-acid chain; its full sequence is Probable inositol 1-monophosphatase ImpA (270 aa).

4 residues coordinate Mg(2+): Glu69, Asp85, Ile87, and Asp88. Glu69 is a substrate binding site. Substrate-binding positions include 87-90, Arg187, and Asp216; that span reads IDGT. Mg(2+) is bound at residue Asp216.

This sequence belongs to the inositol monophosphatase superfamily. Requires Mg(2+) as cofactor.

The enzyme catalyses a myo-inositol phosphate + H2O = myo-inositol + phosphate. It functions in the pathway polyol metabolism; myo-inositol biosynthesis; myo-inositol from D-glucose 6-phosphate: step 2/2. Catalyzes the dephosphorylation of inositol 1-phosphate (I-1-P) to yield free myo-inositol, a key metabolite in mycobacteria. The polypeptide is Probable inositol 1-monophosphatase ImpA (impA) (Mycobacterium tuberculosis (strain ATCC 25618 / H37Rv)).